The following is a 763-amino-acid chain: MNQKTILVLLILAVITIFALVCVLLVGRGGDGGEPSQLPHCPSVSPSAQPWTHPGQSQLFADLSREELTAVMRFLTQRLGPGLVDAAQARPSDNCVFSVELQLPPKAAALAHLDRGSPPPAREALAIVFFGRQPQPNVSELVVGPLPHPSYMRDVTVERHGGPLPYHRRPVLFQEYLDIDQMIFNRELPQASGLLHHCCFYKHRGRNLVTMTTAPRGLQSGDRATWFGLYYNISGAGFFLHHVGLELLVNHKALDPARWTIQKVFYQGRYYDSLAQLEAQFEAGLVNVVLIPDNGTGGSWSLKSPVPPGPAPPLQFYPQGPRFSVQGSRVASSLWTFSFGLGAFSGPRIFDVRFQGERLVYEISLQEALAIYGGNSPAAMTTRYVDGGFGMGKYTTPLTRGVDCPYLATYVDWHFLLESQAPKTIRDAFCVFEQNQGLPLRRHHSDLYSHYFGGLAETVLVVRSMSTLLNYDYVWDTVFHPSGAIEIRFYATGYISSAFLFGATGKYGNQVSEHTLGTVHTHSAHFKVDLDVAGLENWVWAEDMVFVPMAVPWSPEHQLQRLQVTRKLLEMEEQAAFLVGSATPRYLYLASNHSNKWGHPRGYRIQMLSFAGEPLPQNSSMARGFSWERYQLAVTQRKEEEPSSSSVFNQNDPWAPTVDFSDFINNETIAGKDLVAWVTAGFLHIPHAEDIPNTVTVGNGVGFFLRPYNFFDEDPSFYSADSIYFRGDQDAGACEVNPLACLPQAAACAPDLPAFSHGGFSHN.

Topologically, residues 1–5 (MNQKT) are cytoplasmic. A helical; Signal-anchor for type II membrane protein membrane pass occupies residues 6-26 (ILVLLILAVITIFALVCVLLV). Over 27 to 763 (GRGGDGGEPS…AFSHGGFSHN (737 aa)) the chain is Extracellular. The O-linked (GalNAc...) serine glycan is linked to Ser-43. N-linked (GlcNAc...) asparagine glycosylation is present at Asn-137. The cysteines at positions 198 and 199 are disulfide-linked. Thr-212 is a glycosylation site (O-linked (GalNAc...) threonine). Residues Asn-232 and Asn-294 are each glycosylated (N-linked (GlcNAc...) asparagine). Asp-386 serves as the catalytic Proton acceptor. Cys-404 and Cys-430 are disulfide-bonded. Tyr-471 serves as the catalytic Schiff-base intermediate with substrate; via topaquinone. A 2',4',5'-topaquinone modification is found at Tyr-471. The Cu(2+) site is built by His-520 and His-522. Asp-529, Leu-530, Asp-531, and Glu-572 together coordinate Ca(2+). An N-linked (GlcNAc...) (complex) asparagine glycan is attached at Asn-592. An N-linked (GlcNAc...) asparagine glycan is attached at Asn-618. Glu-641, Phe-663, and Asn-665 together coordinate Ca(2+). A glycan (N-linked (GlcNAc...) asparagine) is linked at Asn-666. 3 residues coordinate Ca(2+): Glu-667, Asp-673, and Leu-674. The O-linked (GlcNAc) threonine glycan is linked to Thr-679. His-684 contributes to the Cu(2+) binding site. A disulfide bridge links Cys-734 with Cys-741.

This sequence belongs to the copper/topaquinone oxidase family. In terms of assembly, homodimer; disulfide-linked. Can heterodimerize with isoform 2 leading to reduced surface expression. Probably forms heterodimers with AOC2. The cofactor is Cu(2+). Ca(2+) is required as a cofactor. L-topaquinone serves as cofactor. Post-translationally, topaquinone (TPQ) is generated by copper-dependent autoxidation of a specific tyrosyl residue. N- and O-glycosylated. Strongly expressed on the high endothelial venules of peripheral lymph nodes and on hepatic endothelia. Also highly expressed in appendix, lung and small intestine. Expressed also in adipose tissue, in bone marrow, colon, heart, kidney, ovary, pancreas, placenta, prostate, skeletal muscle, spleen and testis. Isoform 2 seems to be the predominant transcript in fetal kidneys, fetal cartilage and fetal tonsils. The highest relative expression of isoform 2 occurs in skeletal muscle, heart, pancreas, kidney, and lung.

It is found in the cell membrane. It catalyses the reaction methylamine + O2 + H2O = formaldehyde + H2O2 + NH4(+). The catalysed reaction is benzylamine + O2 + H2O = benzaldehyde + H2O2 + NH4(+). It carries out the reaction 2-phenylethylamine + O2 + H2O = 2-phenylacetaldehyde + H2O2 + NH4(+). Catalyzes the oxidative deamination of primary amines to the corresponding aldehydes with the concomitant production of hydrogen peroxide and ammonia. Has a preference for the primary monoamines methylamine and benzylamine. Could also act on 2-phenylethylamine but much less efficiently. At endothelial cells surface can also function as a cell adhesion protein that participates in lymphocyte extravasation and recirculation by mediating the binding of lymphocytes to peripheral lymph node vascular endothelial cells in an L-selectin-independent fashion. Its function is as follows. Has no semicarbazide-sensitive amine oxidase (SSAO) activity. This is Amine oxidase [copper-containing] 3 from Homo sapiens (Human).